The following is a 254-amino-acid chain: Probable pectate lyase E (254 aa).

The first 17 residues, 1–17 (MYQPLLLLPLLLTSAFA), serve as a signal peptide directing secretion. N-linked (GlcNAc...) asparagine glycosylation occurs at Asn175. Residues 228–254 (DNNKKEPAKKSSGPSNACKYKEPLASC) are disordered.

Belongs to the polysaccharide lyase 3 family. The cofactor is Ca(2+).

Its subcellular location is the secreted. The catalysed reaction is Eliminative cleavage of (1-&gt;4)-alpha-D-galacturonan to give oligosaccharides with 4-deoxy-alpha-D-galact-4-enuronosyl groups at their non-reducing ends.. In terms of biological role, pectinolytic enzyme consist of four classes of enzymes: pectin lyase, polygalacturonase, pectin methylesterase and rhamnogalacturonase. Among pectinolytic enzymes, pectin lyase is the most important in depolymerization of pectin, since it cleaves internal glycosidic bonds of highly methylated pectins. Favors pectate, the anion, over pectin, the methyl ester. This chain is Probable pectate lyase E (plyE), found in Aspergillus fumigatus (strain ATCC MYA-4609 / CBS 101355 / FGSC A1100 / Af293) (Neosartorya fumigata).